We begin with the raw amino-acid sequence, 118 residues long: Small ribosomal subunit protein uS13 (118 aa).

A disordered region spans residues 91 to 118 (HRRGLPVRGQRTRTNARTRKGPRRPIKK).

The protein belongs to the universal ribosomal protein uS13 family. As to quaternary structure, part of the 30S ribosomal subunit. Forms a loose heterodimer with protein S19. Forms two bridges to the 50S subunit in the 70S ribosome.

Functionally, located at the top of the head of the 30S subunit, it contacts several helices of the 16S rRNA. In the 70S ribosome it contacts the 23S rRNA (bridge B1a) and protein L5 of the 50S subunit (bridge B1b), connecting the 2 subunits; these bridges are implicated in subunit movement. Contacts the tRNAs in the A and P-sites. The chain is Small ribosomal subunit protein uS13 from Methylococcus capsulatus (strain ATCC 33009 / NCIMB 11132 / Bath).